The following is a 358-amino-acid chain: Peptide chain release factor 1 (358 aa).

Gln-233 is subject to N5-methylglutamine.

The protein belongs to the prokaryotic/mitochondrial release factor family. Methylated by PrmC. Methylation increases the termination efficiency of RF1.

It is found in the cytoplasm. Its function is as follows. Peptide chain release factor 1 directs the termination of translation in response to the peptide chain termination codons UAG and UAA. The chain is Peptide chain release factor 1 from Staphylococcus aureus (strain MSSA476).